The sequence spans 481 residues: Glutamyl-tRNA(Gln) amidotransferase subunit A (481 aa).

Residues lysine 76 and serine 151 each act as charge relay system in the active site. The active-site Acyl-ester intermediate is serine 175.

Belongs to the amidase family. GatA subfamily. Heterotrimer of A, B and C subunits.

It catalyses the reaction L-glutamyl-tRNA(Gln) + L-glutamine + ATP + H2O = L-glutaminyl-tRNA(Gln) + L-glutamate + ADP + phosphate + H(+). Its function is as follows. Allows the formation of correctly charged Gln-tRNA(Gln) through the transamidation of misacylated Glu-tRNA(Gln) in organisms which lack glutaminyl-tRNA synthetase. The reaction takes place in the presence of glutamine and ATP through an activated gamma-phospho-Glu-tRNA(Gln). The protein is Glutamyl-tRNA(Gln) amidotransferase subunit A of Neisseria gonorrhoeae (strain NCCP11945).